Reading from the N-terminus, the 463-residue chain is Phosphoglucosamine mutase (463 aa).

Catalysis depends on Ser102, which acts as the Phosphoserine intermediate. Mg(2+) contacts are provided by Ser102, Asp240, Asp242, and Asp244. Phosphoserine is present on Ser102.

This sequence belongs to the phosphohexose mutase family. The cofactor is Mg(2+). In terms of processing, activated by phosphorylation.

The enzyme catalyses alpha-D-glucosamine 1-phosphate = D-glucosamine 6-phosphate. Its function is as follows. Catalyzes the conversion of glucosamine-6-phosphate to glucosamine-1-phosphate. The chain is Phosphoglucosamine mutase from Mycobacterium leprae (strain Br4923).